The following is a 202-amino-acid chain: Hydrogenase expression/formation protein HupD (202 aa).

3 residues coordinate Ni(2+): Glu28, Asp74, and His105.

This sequence belongs to the peptidase A31 family.

Functionally, not known. Could be involved in the processing of hydrogenase. The protein is Hydrogenase expression/formation protein HupD (hupD) of Rhizobium leguminosarum bv. viciae.